The chain runs to 111 residues: Flagellar hook-basal body complex protein FliE (111 aa).

Belongs to the FliE family.

The protein resides in the bacterial flagellum basal body. This chain is Flagellar hook-basal body complex protein FliE, found in Sinorhizobium fredii (strain NBRC 101917 / NGR234).